The sequence spans 300 residues: Urease accessory protein UreD (300 aa).

Belongs to the UreD family. UreD, UreF and UreG form a complex that acts as a GTP-hydrolysis-dependent molecular chaperone, activating the urease apoprotein by helping to assemble the nickel containing metallocenter of UreC. The UreE protein probably delivers the nickel.

It localises to the cytoplasm. In terms of biological role, required for maturation of urease via the functional incorporation of the urease nickel metallocenter. This is Urease accessory protein UreD from Prochlorococcus marinus (strain MIT 9215).